Here is a 663-residue protein sequence, read N- to C-terminus: DNA ligase (663 aa).

NAD(+) is bound by residues 33-37, 82-83, and Glu-112; these read DYSYD and SI. The N6-AMP-lysine intermediate role is filled by Lys-114. Residues Arg-135, Glu-171, Lys-285, and Lys-309 each contribute to the NAD(+) site. Residues Cys-403, Cys-406, Cys-419, and Cys-424 each coordinate Zn(2+). The region spanning 581 to 663 is the BRCT domain; sequence DKEAPLQGKV…LRILDAKSVS (83 aa).

Belongs to the NAD-dependent DNA ligase family. LigA subfamily. Mg(2+) is required as a cofactor. The cofactor is Mn(2+).

The catalysed reaction is NAD(+) + (deoxyribonucleotide)n-3'-hydroxyl + 5'-phospho-(deoxyribonucleotide)m = (deoxyribonucleotide)n+m + AMP + beta-nicotinamide D-nucleotide.. Its function is as follows. DNA ligase that catalyzes the formation of phosphodiester linkages between 5'-phosphoryl and 3'-hydroxyl groups in double-stranded DNA using NAD as a coenzyme and as the energy source for the reaction. It is essential for DNA replication and repair of damaged DNA. The polypeptide is DNA ligase (Chlamydia trachomatis serovar D (strain ATCC VR-885 / DSM 19411 / UW-3/Cx)).